The following is a 611-amino-acid chain: MHRFNPRRSACDRCRGHKLRCIRLDPGPNDTGALLPCKRCVKAGAECIHTANLSVKPPGDGHHSAHRATESPGHPAAFQQETRVSDRQLRESSLGISPTQPAPQRQTQRWSSSSGPHRPEDRESLPPWHMFATPMFSRQQLGFSKLPSHANGPPDDRTADGFEVGSEAALAAPPGSERSPHRTSRAPSDGTTTFSLVDKVFDLDGRAVCPLSGSVLQENAGIVTAAASTTVTSAQTHHMLPFSQVEPLTPSSYFNVPTCSTLTTGGAGSQSLRDQQMQQHQRHGSASGRSSAATQDSCLQLLSQLSSKFLMDFGKSSAGDWSKMANNNTNNHLSTTISNLFDGLQIFLKTIECLRPATFLENSSSDSECSYSDLCDESEFVGSTGDNQMQVYPGAMAVDHAHEGSSTENSAHRRGRGASPTADAAPQPLDMPMTLTILTCYTWLLKGYEVVLSEIYQMLASQDRHQGLQTLPTIVQGVGIGGFKLEDHPDMQIEIVIHVGWQLLQRIEGLLGVRVVSDEGRGGLGGSSRDESSTEGGDGGGAGSSASDERRILDPRAAAAVLDSWFTTTTRGGSGGSGPGEGTGDSNGGRTVEIKGTIANIRKYLRSYGRN.

The segment at residues 11–47 is a DNA-binding region (zn(2)-C6 fungal-type); it reads CDRCRGHKLRCIRLDPGPNDTGALLPCKRCVKAGAEC. Disordered regions lie at residues 53 to 128, 169 to 192, 265 to 291, 401 to 427, 521 to 550, and 564 to 593; these read LSVK…LPPW, ALAA…DGTT, GGAG…GRSS, AHEG…AAPQ, RGGL…SDER, and SWFT…RTVE. Residues 59–69 are compositionally biased toward basic and acidic residues; sequence GDGHHSAHRAT. Over residues 98 to 109 the composition is skewed to low complexity; it reads PTQPAPQRQTQR. A compositionally biased stretch (polar residues) spans 265–279; that stretch reads GGAGSQSLRDQQMQQ. Residues 572–587 show a composition bias toward gly residues; sequence GGSGGSGPGEGTGDSN.

Its subcellular location is the nucleus. Functionally, transcription factor that specifically regulates the expression of the gene cluster that mediates the biosynthesis of the mycotoxin pyrichalasin H, a tyrosine-derived cytochalasan that inhibits the growth of rice seedlings, but also inhibits lymphocyte capping and actin polymerization and alters cell morphology. Pyrichalasin H is indicated as the responsible agent for the genus-specific pathogenicity of M.grisea toward crabgrass. The polypeptide is Pyrichalasin H cluster regulator pyiR (Pyricularia grisea (Crabgrass-specific blast fungus)).